Here is a 175-residue protein sequence, read N- to C-terminus: MSSKSTKRAKIEDPKDNVFMVEKVLDKRTGKAGRDEFLIQWQGFPESDSSWEPRENLQCVEMLDEFEREFSKREKPIRKRHSQKPEPSEDQADPEEDKDEKKETNQNDKFSLEGKQLKCIVGLTKGPGELHFLCKFSDDTARLLPAKEVNSRYPSQVIRYYESKLTIQDPKADEL.

The Chromo domain maps to 19–78 (FMVEKVLDKRTGKAGRDEFLIQWQGFPESDSSWEPRENLQCVEMLDEFEREFSKREKPIR). Positions 71–109 (SKREKPIRKRHSQKPEPSEDQADPEEDKDEKKETNQNDK) are disordered. Residues 88–98 (SEDQADPEEDK) show a composition bias toward acidic residues. Positions 99–109 (DEKKETNQNDK) are enriched in basic and acidic residues. Positions 115–172 (KQLKCIVGLTKGPGELHFLCKFSDDTARLLPAKEVNSRYPSQVIRYYESKLTIQDPKA) constitute a Chromo 2; shadow subtype domain.

As to quaternary structure, interacts with histone H3 when di-, or tri-methylated at 'Lys-27' (H3K27me2/me3), or tri-methylated at 'Lys-9' (H3K9me3). Interacts with Tar DNA-binding protein homolog tdp-1; interaction may maintain localization of hpl-2 to gene bodies. Interacts with histone H1 his-24, probably via interaction with hpl-1. Interacts with chromobox protein homolog hpl-1. In terms of assembly, may form homodimers. Interacts (via chromo (shadow subtype) domain) with zinc finger protein lin-13 (via PLVPV motif); the interaction is direct and influences localization of hpl-2 to nuclear foci.

It is found in the nucleus. The protein resides in the chromosome. Seems to be involved in transcriptional silencing in heterochromatin-like complexes. Probably does not act as global transcriptional repressor, instead targeting a subset of genes. Involved in RNA processing mediated by Tar DNA-binding protein homolog tdp-1. Plays a role in linking epigenetic regulation with the innate immune response. Involved in the endoplasmic reticulum (ER) stress response via modulation of the unfolded protein response (UPR), acting mainly through the IRE1-XBP1 pathway and perhaps, to a lesser extent, through the autophagy pathway. May act in a common pathway with retinoblastoma-like protein homolog lin-35 and zinc finger protein lin-13 to influence the ER stress response in the intestine. Plays a role in the formation of the vulva and in fertility, acting together with a CoREST-like complex, and chromobox protein homolog hpl-1. Acting in concert with hpl-1 and histone H1 protein his-24, involved in reproduction, somatic gonad development, male tail development and vulval cell fate specification; perhaps as a result of modulating expression of Hox genes mab-5 and egl-5. In vulval cell fate specification may act by repressing transcription, of EGF family gene lin-3 in hypodermal hyp7, and of homeobox lin-39 in vulval precursor cells (VPC). Role in growth and somatic gonad development is antagonized by histone-lysine N-methyltransferase set-2/SET1. Required for larval development, acting redundantly with hpl-1. Plays a role in regulation of the developmentally arrested larval state known as dauer, longevity, and lipid metabolism. This is Chromobox protein homolog hpl-2 from Caenorhabditis elegans.